The primary structure comprises 37 residues: Bacteriocin lactococcin MMFII (37 aa).

C9 and C14 are joined by a disulfide.

It is found in the secreted. Bacteriocin active against Listeria monocytogenes and Lactococcus cremoris. The polypeptide is Bacteriocin lactococcin MMFII (Lactococcus lactis subsp. lactis (Streptococcus lactis)).